Consider the following 478-residue polypeptide: 3-isopropylmalate dehydratase large subunit (478 aa).

[4Fe-4S] cluster-binding residues include cysteine 357, cysteine 418, and cysteine 421.

Belongs to the aconitase/IPM isomerase family. LeuC type 1 subfamily. In terms of assembly, heterodimer of LeuC and LeuD. The cofactor is [4Fe-4S] cluster.

It catalyses the reaction (2R,3S)-3-isopropylmalate = (2S)-2-isopropylmalate. The protein operates within amino-acid biosynthesis; L-leucine biosynthesis; L-leucine from 3-methyl-2-oxobutanoate: step 2/4. Catalyzes the isomerization between 2-isopropylmalate and 3-isopropylmalate, via the formation of 2-isopropylmaleate. The protein is 3-isopropylmalate dehydratase large subunit of Novosphingobium aromaticivorans (strain ATCC 700278 / DSM 12444 / CCUG 56034 / CIP 105152 / NBRC 16084 / F199).